We begin with the raw amino-acid sequence, 328 residues long: MDLNTILIIVGIVALVALIVHGLWSNRREKSKYFDKANKFDRTSLTSRSHTQEEMAQPNNISPNTYVENGHTPIPQPTTEKVPSEAELIDYRQSDKSVDDIKISIPNTQPIYDMGNHRSEPIQPTQPQYDMPTANNVASMTLEQLEEQSRNIGFNGINSSSPELRVQLAELSHEEHQVDYNLSFNEPKAETTAQPKQTTGYIQLYLIPKSSEEFNGAKLVQALENLGFILGKDEMYHRHLDLSVASPVLFSVANLEQPGTFNAYNLAEFNTIGIVFFMQLPSPGNNLANLRMMMRAAHTLAEDLQGVILTEEQEIFDANAEQAYLARV.

The Periplasmic segment spans residues 1 to 4 (MDLN). A helical membrane pass occupies residues 5–25 (TILIIVGIVALVALIVHGLWS). Over 26 to 328 (NRREKSKYFD…NAEQAYLARV (303 aa)) the chain is Cytoplasmic. The segment at 43-82 (TSLTSRSHTQEEMAQPNNISPNTYVENGHTPIPQPTTEKV) is disordered. Over residues 57–67 (QPNNISPNTYV) the composition is skewed to polar residues.

The protein belongs to the ZipA family. In terms of assembly, interacts with FtsZ via their C-terminal domains.

Its subcellular location is the cell inner membrane. In terms of biological role, essential cell division protein that stabilizes the FtsZ protofilaments by cross-linking them and that serves as a cytoplasmic membrane anchor for the Z ring. Also required for the recruitment to the septal ring of downstream cell division proteins. The polypeptide is Cell division protein ZipA (Haemophilus influenzae (strain PittEE)).